Reading from the N-terminus, the 386-residue chain is Cysteine protease Amb a 11.0101 (386 aa).

Residues 1-22 form the signal peptide; sequence MEINKLVCFSFSLVLILGLVES. The interval 6 to 20 is T-cell epitope. MHC class II peptide able to activate CD(4+) T cells of the ragweed pollen-allergic patients indicated by significantly increased IL-2 production compared to non-allergic individuals. Not recognized by IgE of the patients allergic to ragweed pollen; sequence LVCFSFSLVLILGLV. Residues 23 to 108 constitute a propeptide, activation peptide; it reads FHYHERELES…SKISHFQALR (86 aa). N127 carries an N-linked (GlcNAc...) (complex) asparagine glycan. Cystine bridges form between C152-C193, C186-C226, and C283-C334. The active site involves C155. The interval 173-186 is B-cell epitope. Binds to IgE of the patients allergic to ragweed pollen; sequence GKLVKFSEQQLVDC. Active-site residues include H289 and N310. Residues 340–377 are disordered; the sequence is SSFPIMNDPNPPKDDPNGPKDDPDAPKDPKFKTTQRLQ. Over residues 350 to 370 the composition is skewed to basic and acidic residues; sequence PPKDDPNGPKDDPDAPKDPKF. The propeptide at 371–386 is removed in mature form; sequence KTTQRLQGIRTKLLEL.

This sequence belongs to the peptidase C1 family. As to quaternary structure, homodimer. In terms of processing, autocatalytic proteolytic cleavage of N-terminal activation peptide. N-glycosylated. Glycosylation is not required for binding to IgE. As to expression, expressed in pollen (at protein and mRNA level).

Activated by L-cysteine. Inhibited by cysteine protease inhibitor E64 (L-trans-epoxysuccinyl-leucylamide-(4-guanido)-butane). Inhibited by cysteine/serine protease inhibitor leupeptin. Not inhibited by serine protease inhibitors 4-(2-aminoethyl)benzenesulfonyl fluoride hydrochloride (AEBSF) and phenylmethanesulfonyl fluoride (PMSF), metallo protease inhibitor bestatin or aspartic protease inhibitor pepstatin A. Cysteine protease. Hydrolyzes casein and synthetic peptide Boc-Val-Leu-Lys-7-amino-4-methylcoumarin (Boc-VLK-AMC) in vitro. This is Cysteine protease Amb a 11.0101 from Ambrosia artemisiifolia (Common ragweed).